The sequence spans 553 residues: 2-succinyl-5-enolpyruvyl-6-hydroxy-3-cyclohexene-1-carboxylate synthase (553 aa).

The protein belongs to the TPP enzyme family. MenD subfamily. As to quaternary structure, homodimer. It depends on Mg(2+) as a cofactor. The cofactor is Mn(2+). Thiamine diphosphate is required as a cofactor.

The enzyme catalyses isochorismate + 2-oxoglutarate + H(+) = 5-enolpyruvoyl-6-hydroxy-2-succinyl-cyclohex-3-ene-1-carboxylate + CO2. The protein operates within quinol/quinone metabolism; 1,4-dihydroxy-2-naphthoate biosynthesis; 1,4-dihydroxy-2-naphthoate from chorismate: step 2/7. Its pathway is quinol/quinone metabolism; menaquinone biosynthesis. Functionally, catalyzes the thiamine diphosphate-dependent decarboxylation of 2-oxoglutarate and the subsequent addition of the resulting succinic semialdehyde-thiamine pyrophosphate anion to isochorismate to yield 2-succinyl-5-enolpyruvyl-6-hydroxy-3-cyclohexene-1-carboxylate (SEPHCHC). The sequence is that of 2-succinyl-5-enolpyruvyl-6-hydroxy-3-cyclohexene-1-carboxylate synthase from Thermobifida fusca (strain YX).